Consider the following 440-residue polypeptide: Probable D-serine dehydratase (440 aa).

An N6-(pyridoxal phosphate)lysine modification is found at K120.

It belongs to the serine/threonine dehydratase family. DsdA subfamily. It depends on pyridoxal 5'-phosphate as a cofactor.

It catalyses the reaction D-serine = pyruvate + NH4(+). This is Probable D-serine dehydratase from Shouchella clausii (strain KSM-K16) (Alkalihalobacillus clausii).